A 493-amino-acid chain; its full sequence is Vacuolar-processing enzyme (493 aa).

The N-terminal stretch at 1–34 (MAVHRSLLNKPTWCRVAFWWWMLVMVMRIQGTNG) is a signal peptide. Positions 35-53 (KEQDSVIKLPTQEVDAESD) are excised as a propeptide. Residue histidine 176 is part of the active site. Cysteine 218 functions as the Nucleophile in the catalytic mechanism. A disulfide bridge connects residues cysteine 251 and cysteine 265. Asparagine 318 is a glycosylation site (N-linked (GlcNAc...) asparagine). Cystine bridges form between cysteine 429–cysteine 459 and cysteine 441–cysteine 476.

The protein belongs to the peptidase C13 family.

In terms of biological role, asparagine-specific endopeptidase involved in the processing of vacuolar seed protein precursors into the mature forms. This is Vacuolar-processing enzyme from Phaseolus vulgaris (Kidney bean).